Here is a 121-residue protein sequence, read N- to C-terminus: RxLR effector protein PexRD2 (121 aa).

Positions 1–20 (MRLSYVIVVIATSFLVTTEA) are cleaved as a signal peptide. Residues 38–56 (RLLRKHYTAAENDDDSEAR) carry the RxLR-dEER motif. The WY domain stretch occupies residues 57-121 (ALNTEKMKTM…LNYVAEHTAV (65 aa)).

This sequence belongs to the RxLR effector family. In terms of assembly, homodimer. Interacts with host MAPKKK epsilon (via its kinase domain).

It localises to the secreted. The protein localises to the host cytoplasm. Its subcellular location is the host nucleus. Effector that enhances P.infestans colonization of Nicotiana benthamiana leaves. Induces a weak Cell death response in N.benthamiana. PexRD2-induced cell death is dependent on SGT1, suggesting that PexRD2 is recognized by the plant immune system. Interacts with the kinase domain of the host MAPKKK epsilon, a positive regulator of cell death associated with plant immunity, and perturbs signaling pathways triggered by MAPKKK epsilon. This is RxLR effector protein PexRD2 from Phytophthora infestans (strain T30-4) (Potato late blight agent).